Consider the following 600-residue polypeptide: Novobiocin biosynthesis protein H (600 aa).

The disordered stretch occupies residues 505–526 (GGKTDRAGLPDPVKATQPAGLG). The region spanning 526-600 (GPRTPAEKVL…QLAAIATLEE (75 aa)) is the Carrier domain. Position 561 is an O-(pantetheine 4'-phosphoryl)serine (Ser561).

It belongs to the ATP-dependent AMP-binding enzyme family.

The protein operates within antibiotic biosynthesis; novobiocin biosynthesis. Functionally, together with NovI, involved in the formation of a beta-OH-Tyr intermediate in the novobiocin biosynthesis pathway, an aminocoumarin family antibiotic that targets bacterial DNA gyrases. The ATP-dependent AMP-binding region activates L-Tyr as L-tyrosyl-AMP and then transfers the L-tyrosyl group to the acyl carrier domain through thioester formation to form a tyrosyl-S intermediate that is covalently tethered to NovH (L-Tyr-S-NovH). The chain is Novobiocin biosynthesis protein H (novH) from Streptomyces niveus (Streptomyces spheroides).